The chain runs to 273 residues: Homeobox protein HMX2 (273 aa).

Positions 1–154 are disordered; it reads MGSKEDVGKG…TGAAKKKTRT (154 aa). Positions 114 to 123 are enriched in basic and acidic residues; sequence PDFKEEKERL. The homeobox DNA-binding region spans 149–208; it reads KKKTRTVFSRSQVYQLESTFDMKRYLSSSERACLASSLQLTETQVKTWFQNRRNKWKRQL.

It belongs to the HMX homeobox family. As to expression, expressed in the developing CNS, including a specific expression in vestibular structures throughout inner ear development.

The protein localises to the nucleus. Functionally, transcription factor involved in specification of neuronal cell types and which is required for inner ear and hypothalamus development. In Mus musculus (Mouse), this protein is Homeobox protein HMX2 (Hmx2).